The following is a 549-amino-acid chain: Cation/acetate symporter ActP (549 aa).

A run of 13 helical transmembrane segments spans residues Trp-33–Ala-53, Leu-77–Phe-97, Gly-103–Glu-123, Ile-148–Gly-168, Ile-183–Ala-203, Trp-206–Val-226, Ile-262–Leu-282, Gly-303–Val-323, Leu-355–Leu-375, Val-404–Glu-424, Ile-428–Leu-448, Gly-464–Val-484, and Ile-493–Phe-513.

It belongs to the sodium:solute symporter (SSF) (TC 2.A.21) family.

Its subcellular location is the cell inner membrane. In terms of biological role, transports acetate. The polypeptide is Cation/acetate symporter ActP (Salmonella paratyphi C (strain RKS4594)).